Consider the following 298-residue polypeptide: Protoheme IX farnesyltransferase (298 aa).

The next 9 membrane-spanning stretches (helical) occupy residues valine 26–valine 46, isoleucine 52–valine 72, valine 93–leucine 113, leucine 120–leucine 140, isoleucine 148–glycine 168, alanine 174–leucine 194, leucine 219–glutamine 239, serine 241–isoleucine 261, and tyrosine 278–phenylalanine 298.

It belongs to the UbiA prenyltransferase family. Protoheme IX farnesyltransferase subfamily.

It localises to the cell inner membrane. It carries out the reaction heme b + (2E,6E)-farnesyl diphosphate + H2O = Fe(II)-heme o + diphosphate. It participates in porphyrin-containing compound metabolism; heme O biosynthesis; heme O from protoheme: step 1/1. Functionally, converts heme B (protoheme IX) to heme O by substitution of the vinyl group on carbon 2 of heme B porphyrin ring with a hydroxyethyl farnesyl side group. The sequence is that of Protoheme IX farnesyltransferase from Nitrosomonas europaea (strain ATCC 19718 / CIP 103999 / KCTC 2705 / NBRC 14298).